A 563-amino-acid polypeptide reads, in one-letter code: Membrane protein insertase YidC (563 aa).

The chain crosses the membrane as a helical span at residues 1 to 21 (MDIKRTILIVALAIVTYVGVL). A disordered region spans residues 43 to 62 (APGIPDTAAGTNGSASADVP). The next 5 membrane-spanning stretches (helical) occupy residues 344–364 (LELTVDYGFLWFIAQPIFWLL), 370–390 (ILGNWGWSIIVLTMLIKGLFF), 440–460 (LGGCLPILVQMPVFLSLYWVL), 471–491 (WILWITDLSIKDPFFILPIIM), and 518–538 (PIIFTFFFLWFPAGLVLYWVV).

This sequence belongs to the OXA1/ALB3/YidC family. Type 1 subfamily. As to quaternary structure, interacts with the Sec translocase complex via SecD. Specifically interacts with transmembrane segments of nascent integral membrane proteins during membrane integration.

The protein resides in the cell inner membrane. In terms of biological role, required for the insertion and/or proper folding and/or complex formation of integral membrane proteins into the membrane. Involved in integration of membrane proteins that insert both dependently and independently of the Sec translocase complex, as well as at least some lipoproteins. Aids folding of multispanning membrane proteins. The protein is Membrane protein insertase YidC of Pseudomonas savastanoi pv. phaseolicola (strain 1448A / Race 6) (Pseudomonas syringae pv. phaseolicola (strain 1448A / Race 6)).